Consider the following 198-residue polypeptide: Endothelin-3 (198 aa).

The N-terminal stretch at 1-16 (MEPGLWLLFGLTVTSA) is a signal peptide. Residues 17–86 (AGLVPCPQPG…SKGGPVHGRA (70 aa)) constitute a propeptide that is removed on maturation. Residues 22–79 (CPQPGDAGKSGVPGTPPTARSEGDIQEPVAMTAVQGPSPRSPEQEQELGRFGEQASKG) are disordered. Cystine bridges form between Cys-89-Cys-103 and Cys-91-Cys-99. A propeptide spanning residues 110-198 (INTPEQTVPY…RGNGGLRPTR (89 aa)) is cleaved from the precursor. The segment at 150-164 (CACVQSQDSACLHFC) is endothelin-like. A disordered region spans residues 174–198 (SRTATNPDKEEEPASRGNGGLRPTR).

Belongs to the endothelin/sarafotoxin family. Expressed in which included heart, lung, liver, kidney, spleen, stomach, pancreas, duodenum, colon, uterus, ovary and testis.

It localises to the secreted. In terms of biological role, endothelins are endothelium-derived vasoconstrictor peptides. The chain is Endothelin-3 (EDN3) from Canis lupus familiaris (Dog).